The primary structure comprises 666 residues: Endogenous retrovirus group K member 21 Gag polyprotein (666 aa).

Gly2 carries N-myristoyl glycine lipidation. Disordered stretches follow at residues Gly165 to Val189 and Glu217 to Leu264. Residues Gly232–Pro247 show a composition bias toward pro residues. CCHC-type zinc fingers lie at residues Gly544–Val561 and Asp580–Ser597. Residues Lys598–Leu641 form a disordered region. Residues Gln604–Gly622 show a composition bias toward polar residues. Residues Phe624–Pro640 are compositionally biased toward low complexity.

The protein belongs to the beta type-B retroviral Gag protein family. HERV class-II K(HML-2) gag subfamily. Post-translationally, myristoylation is essential for retroviral assembly. Alteration of the glycine residue leads to a block in the budding of particles and an accumulation of Gag inside the cell. Specific enzymatic cleavages may yield mature proteins.

The protein localises to the cell membrane. Functionally, the products of the Gag polyproteins of infectious retroviruses perform highly complex orchestrated tasks during the assembly, budding, maturation, and infection stages of the viral replication cycle. During viral assembly, the proteins form membrane associations and self-associations that ultimately result in budding of an immature virion from the infected cell. Gag precursors also function during viral assembly to selectively bind and package two plus strands of genomic RNA. Endogenous Gag proteins may have kept, lost or modified their original function during evolution. This Homo sapiens (Human) protein is Endogenous retrovirus group K member 21 Gag polyprotein (ERVK-21).